Here is a 256-residue protein sequence, read N- to C-terminus: 3-hydroxy-5-phosphonooxypentane-2,4-dione thiolase (256 aa).

The active-site Schiff-base intermediate with substrate is Lys168.

Belongs to the DeoC/FbaB aldolase family. Homodecamer.

It localises to the cytoplasm. The catalysed reaction is dihydroxyacetone phosphate + acetyl-CoA = 3-hydroxy-2,4-dioxopentyl phosphate + CoA. In terms of biological role, involved in the degradation of phospho-AI-2, thereby terminating induction of the lsr operon and closing the AI-2 signaling cycle. Catalyzes the transfer of an acetyl moiety from 3-hydroxy-5-phosphonooxypentane-2,4-dione to CoA to form glycerone phosphate and acetyl-CoA. This chain is 3-hydroxy-5-phosphonooxypentane-2,4-dione thiolase (lsrF), found in Shigella flexneri.